The primary structure comprises 436 residues: Adenylosuccinate synthetase (436 aa).

Residues 21-27 (GDEGKGK) and 49-51 (GHT) contribute to the GTP site. Catalysis depends on Asp-22, which acts as the Proton acceptor. Mg(2+)-binding residues include Asp-22 and Gly-49. IMP-binding positions include 22–25 (DEGK), 47–50 (NAGH), Thr-135, Arg-149, Gln-230, Thr-245, and Arg-309. Catalysis depends on His-50, which acts as the Proton donor. 305–311 (TTTGRPR) lines the substrate pocket. Residues Arg-311, 337 to 339 (KVD), and 423 to 425 (SSG) each bind GTP.

The protein belongs to the adenylosuccinate synthetase family. As to quaternary structure, homodimer. The cofactor is Mg(2+).

Its subcellular location is the cytoplasm. It carries out the reaction IMP + L-aspartate + GTP = N(6)-(1,2-dicarboxyethyl)-AMP + GDP + phosphate + 2 H(+). Its pathway is purine metabolism; AMP biosynthesis via de novo pathway; AMP from IMP: step 1/2. In terms of biological role, plays an important role in the de novo pathway of purine nucleotide biosynthesis. Catalyzes the first committed step in the biosynthesis of AMP from IMP. The chain is Adenylosuccinate synthetase from Thermoplasma volcanium (strain ATCC 51530 / DSM 4299 / JCM 9571 / NBRC 15438 / GSS1).